The primary structure comprises 617 residues: MPQYRSRTSTHGRNMAGARALWRATGMGDADFGKPIIAIANSFTQFVPGHVHLKDLGQLVAREIEAAGGVAKEFNTIAVDDGIAMGHGGMLYSLPSRELIADAVEYMVNAHCADALVCISNCDKITPGMLMAAMRLNIPTIFVSGGPMEAGKYIADGETRAADLITAMVVAADPTKTDEQAAVMERSACPTCGSCSGMFTANSMNCLTEALGLALPGNGSLLATHADRKRLFVEAGWQIVDLARRYYEQDDEGVLPRRIGGFKAFENAMSLDIAMGGSTNTVLHLLAAAREAELDFTMADIDRLSRRVPNLCKVSPSVSNVHMEDVHRAGGIMGILGALDRAGLIHRDCATVHEKTIGEAIDRWDVMRGGETAKTLYSAAPGGVRTTEAFSQSRRYESLDLDREKGVIRDAEHAFSKDGGLAVLYGNIALDGAIVKTAGVDASILVFEGPARIFESQEDAVAGILGDRVKAGDVVLIRYEGPKGGPGMQEMLYPTSYLKSKGLGKSCALITDGRFSGGTAGLSIGHISPEAAQGGAIGLVEEGDIIAIDIPNRKLDVKLDEATLEARRAAMEAKGKAAWKPAARERVVSAALQAYAALTTSAANGAVRDVTQVQRGR.

Mg(2+) is bound at residue D81. C122 provides a ligand contact to [2Fe-2S] cluster. The Mg(2+) site is built by D123 and K124. Residue K124 is modified to N6-carboxylysine. C195 is a [2Fe-2S] cluster binding site. E490 is a binding site for Mg(2+). S516 acts as the Proton acceptor in catalysis.

This sequence belongs to the IlvD/Edd family. In terms of assembly, homodimer. The cofactor is [2Fe-2S] cluster. Mg(2+) serves as cofactor.

The catalysed reaction is (2R)-2,3-dihydroxy-3-methylbutanoate = 3-methyl-2-oxobutanoate + H2O. It catalyses the reaction (2R,3R)-2,3-dihydroxy-3-methylpentanoate = (S)-3-methyl-2-oxopentanoate + H2O. It participates in amino-acid biosynthesis; L-isoleucine biosynthesis; L-isoleucine from 2-oxobutanoate: step 3/4. The protein operates within amino-acid biosynthesis; L-valine biosynthesis; L-valine from pyruvate: step 3/4. Functions in the biosynthesis of branched-chain amino acids. Catalyzes the dehydration of (2R,3R)-2,3-dihydroxy-3-methylpentanoate (2,3-dihydroxy-3-methylvalerate) into 2-oxo-3-methylpentanoate (2-oxo-3-methylvalerate) and of (2R)-2,3-dihydroxy-3-methylbutanoate (2,3-dihydroxyisovalerate) into 2-oxo-3-methylbutanoate (2-oxoisovalerate), the penultimate precursor to L-isoleucine and L-valine, respectively. The polypeptide is Dihydroxy-acid dehydratase (Acidiphilium cryptum (strain JF-5)).